The following is a 451-amino-acid chain: PTS system galactose-specific EIIC component (451 aa).

The PTS EIIC type-3 domain maps to 8-427 (LNKTLMPLAS…VLNVLIYYPF (420 aa)). 11 consecutive transmembrane segments (helical) span residues 40–60 (LGIA…VDFL), 69–89 (FSAV…YNFA), 104–124 (GLLS…VPVV), 151–171 (TGST…LVYI), 190–210 (VVDS…MFGI), 239–259 (ANPW…FFGI), 263–283 (LIGG…IDAY), 296–316 (IVFA…GLVI), 332–352 (LGAI…LPMM), 356–376 (LFFI…LGLA), and 403–423 (ISGG…NVLI).

The protein resides in the cell membrane. Functionally, the phosphoenolpyruvate-dependent sugar phosphotransferase system (PTS), a major carbohydrate active transport system, catalyzes the phosphorylation of incoming sugar substrates concomitant with their translocation across the cell membrane. Involved in galactose transport with PtcA and PtcB. The polypeptide is PTS system galactose-specific EIIC component (Lactococcus lactis subsp. cremoris (strain MG1363)).